The primary structure comprises 359 residues: MKLTSLSKNANSTATAVTVSSIQKLPFLSLSETLPCPKSSRKPTFLPLRCRRRPKLDLLWGKFRVRASDAGVGSGSYSGGEEDGSQSSSLDQSPATSSESLKPRGPFPYSLSIALVLLSCGLVFSLITFVKGGPSSVLAAVAKSGFTAAFSLIFVSEIGDKTFFIAALLAMQYEKTLVLLGSMGALSLMTILSVVIGKIFQSVPAQFQTTLPIGEYAAIALLMFFGLKSIKDAWDLPPVEAKNGEETGIELGEYSEAEELVKEKASKKLTNPLEILWKSFSLVFFAEWGDRSMLATVALGAAQSPLGVASGAIAGHLVATVLAIMGGAFLANYISEKLVGYVGGALFLVFAAATFFGVF.

The transit peptide at 1–66 directs the protein to the chloroplast; that stretch reads MKLTSLSKNA…DLLWGKFRVR (66 aa). The segment at 71 to 102 is disordered; that stretch reads GVGSGSYSGGEEDGSQSSSLDQSPATSSESLK. A compositionally biased stretch (low complexity) spans 85–98; the sequence is SQSSSLDQSPATSS. 7 consecutive transmembrane segments (helical) span residues 110–130, 149–169, 177–197, 207–227, 269–289, 311–331, and 339–359; these read SLSI…ITFV, AFSL…AALL, LVLL…VVIG, FQTT…FFGL, LTNP…AEWG, GAIA…AFLA, and VGYV…FGVF.

The protein belongs to the GDT1 family.

The protein resides in the plastid. The protein localises to the chloroplast membrane. Its function is as follows. Probable chloroplast-localized Mn(2+)/H(+) and/or Ca(2+)/H(+) antiporter regulating Ca(2+), Mn(2+) and pH homeostasis. In Arabidopsis thaliana (Mouse-ear cress), this protein is Protein PAM71-homolog, chloroplastic.